The sequence spans 346 residues: Methionine import ATP-binding protein MetN 1 (346 aa).

An ABC transporter domain is found at 2–241; that stretch reads IELKNVSKVF…PQHVTTKKFV (240 aa). 38–45 lines the ATP pocket; sequence GYSGAGKS.

Belongs to the ABC transporter superfamily. Methionine importer (TC 3.A.1.24) family. In terms of assembly, the complex is composed of two ATP-binding proteins (MetN), two transmembrane proteins (MetI) and a solute-binding protein (MetQ).

Its subcellular location is the cell membrane. It catalyses the reaction L-methionine(out) + ATP + H2O = L-methionine(in) + ADP + phosphate + H(+). It carries out the reaction D-methionine(out) + ATP + H2O = D-methionine(in) + ADP + phosphate + H(+). Its function is as follows. Part of the ABC transporter complex MetNIQ involved in methionine import. Responsible for energy coupling to the transport system. The chain is Methionine import ATP-binding protein MetN 1 from Bacillus cereus (strain ZK / E33L).